The primary structure comprises 97 residues: Putative septation protein SpoVG (97 aa).

It belongs to the SpoVG family.

Functionally, could be involved in septation. The sequence is that of Putative septation protein SpoVG from Borreliella burgdorferi (strain ATCC 35210 / DSM 4680 / CIP 102532 / B31) (Borrelia burgdorferi).